The primary structure comprises 1409 residues: DNA-directed RNA polymerase subunit beta' (1409 aa).

The Zn(2+) site is built by Cys70, Cys72, Cys85, and Cys88. Mg(2+) is bound by residues Asp458, Asp460, and Asp462. The Zn(2+) site is built by Cys813, Cys887, Cys894, and Cys897.

The protein belongs to the RNA polymerase beta' chain family. The RNAP catalytic core consists of 2 alpha, 1 beta, 1 beta' and 1 omega subunit. When a sigma factor is associated with the core the holoenzyme is formed, which can initiate transcription. Mg(2+) is required as a cofactor. Zn(2+) serves as cofactor.

It carries out the reaction RNA(n) + a ribonucleoside 5'-triphosphate = RNA(n+1) + diphosphate. Its function is as follows. DNA-dependent RNA polymerase catalyzes the transcription of DNA into RNA using the four ribonucleoside triphosphates as substrates. The sequence is that of DNA-directed RNA polymerase subunit beta' from Acidovorax ebreus (strain TPSY) (Diaphorobacter sp. (strain TPSY)).